The sequence spans 752 residues: Probable beta-glucosidase D (752 aa).

Residues 1 to 18 form the signal peptide; it reads MRFVSLAVGAALLGAAGA. N-linked (GlcNAc...) asparagine glycosylation is found at Asn187 and Asn237. Residue Asp265 is part of the active site. N-linked (GlcNAc...) asparagine glycosylation is found at Asn299, Asn343, Asn441, Asn510, Asn532, Asn571, Asn586, Asn638, Asn661, and Asn743.

Belongs to the glycosyl hydrolase 3 family.

The protein localises to the secreted. The catalysed reaction is Hydrolysis of terminal, non-reducing beta-D-glucosyl residues with release of beta-D-glucose.. Its pathway is glycan metabolism; cellulose degradation. Beta-glucosidases are one of a number of cellulolytic enzymes involved in the degradation of cellulosic biomass. Catalyzes the last step releasing glucose from the inhibitory cellobiose. This chain is Probable beta-glucosidase D (bglD), found in Aspergillus flavus (strain ATCC 200026 / FGSC A1120 / IAM 13836 / NRRL 3357 / JCM 12722 / SRRC 167).